The primary structure comprises 411 residues: uncharacterized protein (411 aa).

The UmuC domain occupies 20–199; sequence FLYFDFDAFF…LPITEIPGIG (180 aa).

Belongs to the DNA polymerase type-Y family.

This is an uncharacterized protein from Mycoplasma genitalium (strain ATCC 33530 / DSM 19775 / NCTC 10195 / G37) (Mycoplasmoides genitalium).